A 381-amino-acid polypeptide reads, in one-letter code: L-lactate dehydrogenase (381 aa).

The region spanning 1–380 (MIISASTDYR…SADSLVRELG (380 aa)) is the FMN hydroxy acid dehydrogenase domain. Y24 serves as a coordination point for substrate. Residues S106 and Q127 each contribute to the FMN site. Residue Y129 participates in substrate binding. Residue T155 coordinates FMN. R164 is a binding site for substrate. K251 provides a ligand contact to FMN. The active-site Proton acceptor is the H275. A substrate-binding site is contributed by R278. An FMN-binding site is contributed by 306–330 (DSGIRTGLDVVRMIALGADSVLLGR).

This sequence belongs to the FMN-dependent alpha-hydroxy acid dehydrogenase family. As to quaternary structure, homotetramer. FMN serves as cofactor.

It localises to the cell inner membrane. The enzyme catalyses (S)-lactate + A = pyruvate + AH2. Catalyzes the conversion of L-lactate to pyruvate. Is coupled to the respiratory chain. This Pseudomonas paraeruginosa (strain DSM 24068 / PA7) (Pseudomonas aeruginosa (strain PA7)) protein is L-lactate dehydrogenase.